A 318-amino-acid chain; its full sequence is Glycine--tRNA ligase alpha subunit (318 aa).

The protein belongs to the class-II aminoacyl-tRNA synthetase family. As to quaternary structure, tetramer of two alpha and two beta subunits.

Its subcellular location is the cytoplasm. It carries out the reaction tRNA(Gly) + glycine + ATP = glycyl-tRNA(Gly) + AMP + diphosphate. The chain is Glycine--tRNA ligase alpha subunit (glyQ) from Moraxella catarrhalis (Branhamella catarrhalis).